The chain runs to 238 residues: 7-cyano-7-deazaguanine synthase 1 (238 aa).

14 to 24 contributes to the ATP binding site; it reads FSGGQDSATCL. Residues cysteine 202, cysteine 217, cysteine 220, and cysteine 223 each coordinate Zn(2+).

Belongs to the QueC family. It depends on Zn(2+) as a cofactor.

The enzyme catalyses 7-carboxy-7-deazaguanine + NH4(+) + ATP = 7-cyano-7-deazaguanine + ADP + phosphate + H2O + H(+). It functions in the pathway purine metabolism; 7-cyano-7-deazaguanine biosynthesis. Its function is as follows. Catalyzes the ATP-dependent conversion of 7-carboxy-7-deazaguanine (CDG) to 7-cyano-7-deazaguanine (preQ(0)). This chain is 7-cyano-7-deazaguanine synthase 1, found in Rhodopseudomonas palustris (strain HaA2).